We begin with the raw amino-acid sequence, 996 residues long: Disease resistance protein RGA4 (996 aa).

The structured coiled coil (CC) domain stretch occupies residues 1–176; it reads MEAALLSGFI…PRIHEADLVG (176 aa). The stretch at 111–138 forms a coiled coil; that stretch reads NLQLAQQLQRLKRMAAEANQRKQRYTAA. In terms of domain architecture, NB-ARC spans 180–462; that stretch reads DREELLEQLA…RWLAEGFVEP (283 aa). LRR repeat units lie at residues 481–503, 504–528, 529–549, 577–599, 600–621, 622–644, 698–722, 759–781, 782–804, 805–830, and 851–874; these read RNII…TYGM, MREF…KFVP, KYVR…NFNG, LRVL…ICNL, VLLK…IAKL, KDLE…VFGL, MNKL…DLRE, PCYL…VTSL, RGLK…ALSN, LSYL…GFPR, and LPFL…QIEC.

Belongs to the disease resistance NB-LRR family. As to quaternary structure, forms homodimer or heterodimer with RGA5 through its coiled coil (CC) domain. Expressed in leaves.

Its subcellular location is the cytoplasm. Its function is as follows. Disease resistance (R) protein. Resistance proteins guard the plant against pathogens that contain an appropriate avirulence protein via an indirect interaction with this avirulence protein. That triggers a defense system including the hypersensitive response, which restricts the pathogen growth. Contribution of RGA5 is required to recognize the effector avirulence proteins AVR-Pia and AVR1-CO39 from M.oryzae. Acts as a constitutively active cell death inducer that is repressed by RGA5. Immune response triggered by the RGA4-RGA5 -mediated recognition of AVR1-CO39 confers resistance to X.oryzae pathovars. The sequence is that of Disease resistance protein RGA4 from Oryza sativa subsp. japonica (Rice).